We begin with the raw amino-acid sequence, 403 residues long: Alkaline protease 1 (403 aa).

Residues 1 to 21 (MLSIKRTLLLLGAVLPAVFGA) form the signal peptide. The propeptide occupies 22 to 125 (PVQETRRAAQ…QIWYLDALTT (104 aa)). The 85-residue stretch at 36–120 (KYIVTFKPGT…HVEEDQIWYL (85 aa)) folds into the Inhibitor I9 domain. The Peptidase S8 domain occupies 130–403 (PWGLGSISHK…PNKLAYNGNA (274 aa)). Active-site charge relay system residues include D162 and H193. 2 N-linked (GlcNAc...) asparagine glycosylation sites follow: N253 and N307. Residue S349 is the Charge relay system of the active site. N-linked (GlcNAc...) asparagine glycosylation occurs at N367.

The protein belongs to the peptidase S8 family.

It localises to the secreted. It carries out the reaction Hydrolysis of proteins with broad specificity, and of Bz-Arg-OEt &gt; Ac-Tyr-OEt. Does not hydrolyze peptide amides.. Its function is as follows. Secreted alkaline protease that allows assimilation of proteinaceous substrates. Acts as a significant virulence factor in invasive aspergillosis. Involved in immune evasion from the human and mice complement systems during infection. Efficiently cleaves important components of the complement cascade such as such as C3, C4, C5, and C1q, as well as IgG, which leads to down-regulation of complement activation at the hyphal surface. This chain is Alkaline protease 1 (alp1), found in Aspergillus fumigatus (strain CBS 144.89 / FGSC A1163 / CEA10) (Neosartorya fumigata).